A 106-amino-acid chain; its full sequence is MRGNIAQLMQQAQKMQENLQRAQEELAKLEVTGTAGGGMVNVTLTGAKECRKVRIDPSILSDQEMAEDLIAAAFNDASNKIDAESKDRMGSATAGMQLPPGMKLPF.

Residues 80–89 (KIDAESKDRM) show a composition bias toward basic and acidic residues. The segment at 80 to 106 (KIDAESKDRMGSATAGMQLPPGMKLPF) is disordered.

The protein belongs to the YbaB/EbfC family. In terms of assembly, homodimer.

The protein localises to the cytoplasm. It localises to the nucleoid. In terms of biological role, binds to DNA and alters its conformation. May be involved in regulation of gene expression, nucleoid organization and DNA protection. The sequence is that of Nucleoid-associated protein XOO1065 from Xanthomonas oryzae pv. oryzae (strain KACC10331 / KXO85).